Reading from the N-terminus, the 283-residue chain is Ribose-phosphate pyrophosphokinase (283 aa).

Residues 34–36 (DGE) and 89–90 (RQ) contribute to the ATP site. Residues histidine 120 and aspartate 159 each coordinate Mg(2+). The active site involves lysine 182. D-ribose 5-phosphate contacts are provided by arginine 184 and aspartate 208.

This sequence belongs to the ribose-phosphate pyrophosphokinase family. Class III (archaeal) subfamily. Mg(2+) serves as cofactor.

The protein resides in the cytoplasm. The enzyme catalyses D-ribose 5-phosphate + ATP = 5-phospho-alpha-D-ribose 1-diphosphate + AMP + H(+). The protein operates within metabolic intermediate biosynthesis; 5-phospho-alpha-D-ribose 1-diphosphate biosynthesis; 5-phospho-alpha-D-ribose 1-diphosphate from D-ribose 5-phosphate (route I): step 1/1. Its function is as follows. Involved in the biosynthesis of the central metabolite phospho-alpha-D-ribosyl-1-pyrophosphate (PRPP) via the transfer of pyrophosphoryl group from ATP to 1-hydroxyl of ribose-5-phosphate (Rib-5-P). This chain is Ribose-phosphate pyrophosphokinase, found in Methanosarcina acetivorans (strain ATCC 35395 / DSM 2834 / JCM 12185 / C2A).